The following is a 307-amino-acid chain: MNGIINVYKEKGFTSFDVCAKLRGILKQKKIGHTGTLDPDAEGVLPVCVGNATKLCDLLTDKDKVYEAVLTLGIITDTEDMTGEVLERRLVTATYDRVLEVVEQFTRTYDQIPPMYSAIKVNGQKLYELARQGKVIERKPRTVTIHAIDILGVTPLEEQPEIVHEVRMRVSCSKGTYIRSLCRDIGEALQCGGCMKSLIRTQVSIFTLENTLRLAEIEECVKNQTLEQVLMPVDKLFLSMPKVVVKKESCKFLYNGNQLVEDNFTWEKVSDQINIDKIRVYDSEDVFTGIYEYDEKKNCYQPVKMFL.

Asp-38 serves as the catalytic Nucleophile.

This sequence belongs to the pseudouridine synthase TruB family. Type 1 subfamily.

It carries out the reaction uridine(55) in tRNA = pseudouridine(55) in tRNA. Responsible for synthesis of pseudouridine from uracil-55 in the psi GC loop of transfer RNAs. The polypeptide is tRNA pseudouridine synthase B (Lachnoclostridium phytofermentans (strain ATCC 700394 / DSM 18823 / ISDg) (Clostridium phytofermentans)).